The primary structure comprises 411 residues: Serine hydroxymethyltransferase (411 aa).

Residues L119 and G123 to L125 each bind (6S)-5,6,7,8-tetrahydrofolate. K228 bears the N6-(pyridoxal phosphate)lysine mark. (6S)-5,6,7,8-tetrahydrofolate is bound at residue S351 to F353.

The protein belongs to the SHMT family. Homodimer. Requires pyridoxal 5'-phosphate as cofactor.

The protein localises to the cytoplasm. It carries out the reaction (6R)-5,10-methylene-5,6,7,8-tetrahydrofolate + glycine + H2O = (6S)-5,6,7,8-tetrahydrofolate + L-serine. It functions in the pathway one-carbon metabolism; tetrahydrofolate interconversion. It participates in amino-acid biosynthesis; glycine biosynthesis; glycine from L-serine: step 1/1. Its function is as follows. Catalyzes the reversible interconversion of serine and glycine with tetrahydrofolate (THF) serving as the one-carbon carrier. This reaction serves as the major source of one-carbon groups required for the biosynthesis of purines, thymidylate, methionine, and other important biomolecules. Also exhibits THF-independent aldolase activity toward beta-hydroxyamino acids, producing glycine and aldehydes, via a retro-aldol mechanism. The chain is Serine hydroxymethyltransferase from Clostridium novyi (strain NT).